Here is a 222-residue protein sequence, read N- to C-terminus: Gamma-glutamyl cyclotransferase gliK (222 aa).

The next 2 membrane-spanning stretches (helical) occupy residues 154–174 (GWWF…AAII) and 187–207 (GHVP…MWAQ).

It belongs to the class-I pyridoxal-phosphate-dependent aminotransferase family.

It localises to the membrane. The enzyme catalyses an alpha-(gamma-L-glutamyl)-L-amino acid = 5-oxo-L-proline + an L-alpha-amino acid. Its pathway is secondary metabolite biosynthesis. In terms of biological role, gamma-glutamyl cyclotransferase; part of the gene cluster that mediates the biosynthesis of an unusual class of epipolythiodioxopiperazines (ETPs) lacking the reactive thiol group important for toxicity. Firstly, L-tyrosine is prenylated by tcpD, before undergoing condensation with L-glycine in a reaction catalyzed by the NRPS tcpP leading to the diketopiperazine (DKP) backbone. Afterwards the alpha-carbon of tyrosine is oxidized by the cytochrome P450 tcpC to form a hydroxyl group. However, in contrast other ETP biosynthesis pathways studied so far, tcpC is not able to bishydroxylate the DKP at both alpha-carbon positions, but hydroxylates the alpha-carbon of the tyrosine part and the nitrogen of the glycine part. The next steps involve an alpha,beta-elimination reaction catalyzed by tcpI, a methylation by the methyltransferase tcpN the action of the four enzyme cascade tcpG/K/J/I. Due to a dysfunctional cytochrome P450 monooxygenase tcpC, the pathway leads to the biosynthesis of probable non-toxic metabolites lacking the reactive thiol group. In Claviceps purpurea (strain 20.1) (Ergot fungus), this protein is Gamma-glutamyl cyclotransferase gliK.